The primary structure comprises 267 residues: Putative carboxymethylenebutenolidase (267 aa).

Active-site residues include Cys137, Asp194, and His226.

This sequence belongs to the dienelactone hydrolase family.

The enzyme catalyses 2-(5-oxo-2,5-dihydrofuran-2-ylidene)acetate + H2O = 4-oxohex-2-enedioate + H(+). This is Putative carboxymethylenebutenolidase from Yersinia pestis.